Consider the following 355-residue polypeptide: Peptide chain release factor 1 (355 aa).

N5-methylglutamine is present on Gln-231.

It belongs to the prokaryotic/mitochondrial release factor family. In terms of processing, methylated by PrmC. Methylation increases the termination efficiency of RF1.

It is found in the cytoplasm. Functionally, peptide chain release factor 1 directs the termination of translation in response to the peptide chain termination codons UAG and UAA. This Wolinella succinogenes (strain ATCC 29543 / DSM 1740 / CCUG 13145 / JCM 31913 / LMG 7466 / NCTC 11488 / FDC 602W) (Vibrio succinogenes) protein is Peptide chain release factor 1.